The primary structure comprises 617 residues: Protein DWARF AND LOW-TILLERING (617 aa).

2 disordered regions span residues 29 to 92 (KRGS…HDED) and 159 to 206 (PSLA…GVPA). Positions 171–187 (KSPSDSSSSSGTDGGSS) are enriched in low complexity. The GRAS domain maps to 208–594 (GQAEREALEL…QPLYTVTAWT (387 aa)). The tract at residues 215 to 295 (LELVRALTAC…LTDDAFGGGD (81 aa)) is leucine repeat I (LRI). The VHIID stretch occupies residues 301–366 (LRILNAITPI…VPPAHVRITG (66 aa)). Residues 332-336 (VHVID) carry the VHIID motif. Positions 376-408 (ETGARLARVAAALGLAFEFHAVVDRLEDVRLWM) are leucine repeat II (LRII). Residues 417-508 (VAVNCVLAMH…EEMFAREIRN (92 aa)) form a PFYRE region. The interval 511–594 (AFEGPERFER…QPLYTVTAWT (84 aa)) is SAW. The disordered stretch occupies residues 596–617 (AGDGAGGSTVSASTTASHSQQS). Over residues 603 to 617 (STVSASTTASHSQQS) the composition is skewed to low complexity.

This sequence belongs to the GRAS family. Interacts with GSK2. Interacts with SMOS1 (via C-terminus). In terms of processing, phosphorylated on serine and threonine residues by GSK2. Dephosphorylated during response to brassinosteroid. Expressed in the shoot apical meristem (SAM) and elongating cells of young seedlings. Expressed in leaf joints, culms, internodes, stems, young panicles, primary roots and lateral roots.

The protein localises to the nucleus. Probable transcription factor that acts as a positive regulator of brassinosteroid (BR) signaling. Functions downstream of BRI1 and GSK2 to modulate BR responses. Acts as a direct target of GSK2 kinase to mediate BR responses. Involved in feedback inhibition of BR biosynthetic genes. Repressed by BZR1. Cooperatively functions in a transactivating complex with SMOS1 to enhance the transcription of the SMOS1 target PHI-1, and regulate plant organ size. Interaction between SMOS1 and DLT is a crosstalk point for auxin and brassinosteroid signaling. This Oryza sativa subsp. japonica (Rice) protein is Protein DWARF AND LOW-TILLERING.